Reading from the N-terminus, the 757-residue chain is MLAKAAASASSSMEKGSVYLDFTDIKCIQYTSSIRKLEQLVHVCKVLLRNLSMKSNENLIPLSNIVIALGSGFQFNVSAAIEKRIELLSQFRSCKANATNLPLSTTSLKLEVDLVPVEEDSVLFVSKFYNKELQSQLLTTLQRVAEDSLQIYQARIRQLTMERNSNRPTDLSGRTTIFNEDALNDLLSPNELAFGLDLLVNIRNRSTDTSSSAFFALALPILEKFRSNLNDKCIPPIRSYYTSIMKFSRTKGVFSNNVLIQLPYWQFTLHRMYAASLRAKCLIDVIRAVLRQIYIPNKHHFHDNTTKLHSKNLHEYSELLEELETFCFTQELEKDLIEAFKSYGNQNTVYQVQFNNISSAYQRLLLKSTQMLRKAAKLVDSFSTQWKSISDNMKASKYDDMNIDEMAKMAEEKLAVDELAYNEKIKEQERQREEKKNSSLSQKNTSSSSSITSNSSSLNVSPNILSPLRLSRTSSVSRSEESRSPSSPIPFTDAKSNISAKKTRSVRTRNRSSSLQSVSSLEDTSTARNGMRSNSLQSGSLNTQRIVQNAYSKALLSLNEKRGPRLTPTKLNNSIRSKSPSPTVSRQNSVKQRNKVNILKLNEVDEDDINEKFHDLKLDDDTLIVSQEVLSPEGSETPKIIVSVADDNQSSSNNDSEVEGIVKKVRFIGVPPMSQDENPEPKRRGWYKKPAVLHYPPPPAQHSLQKFRTTQEGLAFRTSLISRDQGSDKKFGFDSMYSSGQGADTKIVGKIKDKLFK.

Over residues 427 to 437 (EQERQREEKKN) the composition is skewed to basic and acidic residues. Disordered stretches follow at residues 427-541 (EQER…SGSL) and 558-590 (LNEKRGPRLTPTKLNNSIRSKSPSPTVSRQNSV). The span at 438–477 (SSLSQKNTSSSSSITSNSSSLNVSPNILSPLRLSRTSSVS) shows a compositional bias: low complexity. Positions 501–510 (KKTRSVRTRN) are enriched in basic residues. Over residues 511–521 (RSSSLQSVSSL) the composition is skewed to low complexity. Composition is skewed to polar residues over residues 522–541 (EDTSTARNGMRSNSLQSGSL) and 569–590 (TKLNNSIRSKSPSPTVSRQNSV).

Belongs to the GIP4 family. In terms of assembly, interacts with GLC7.

The protein resides in the cytoplasm. Its function is as follows. GLC7 phosphatase-regulatory protein involved in GLC7 subcellular redistribution and chromosome segregation. This Kluyveromyces lactis (strain ATCC 8585 / CBS 2359 / DSM 70799 / NBRC 1267 / NRRL Y-1140 / WM37) (Yeast) protein is GLC7-interacting protein 4 (GIP4).